The sequence spans 88 residues: Protein K3 (88 aa).

The S1 motif domain occupies 8-82 (LPNAGDVIKG…TKGYIDVNYK (75 aa)). 2 binding to host EIF2AK2/PKR regions span residues 43–53 (SVKMHMDRYVE) and 74–79 (KGYIDV).

This sequence belongs to the orthopoxvirus OPG041 family. As to quaternary structure, interacts with host EIF2AK2/PKR kinase.

Viral mimic of eIF-2-alpha that acts as a pseudosubstrate for EIF2AK2/PKR kinase. Inhibits therefore eIF-2-alpha phosphorylation by host EIF2AK2/PKR kinase and prevents protein synthesis shutoff. Determinant of host species specificity. The sequence is that of Protein K3 (OPG041) from Homo sapiens (Human).